We begin with the raw amino-acid sequence, 71 residues long: uncharacterized protein (71 aa).

Residues 23-71 (ENEKAGQSEEYDDDDKEENKKRRRNNGRRGPPEKKKSRRGGEEQTQRII) are disordered. Positions 52-71 (GPPEKKKSRRGGEEQTQRII) are enriched in basic and acidic residues.

This is an uncharacterized protein from Caenorhabditis elegans.